A 455-amino-acid chain; its full sequence is Probable ATP-dependent RNA helicase DDX47 (455 aa).

Residues 1–21 (MAADEEPDSPSGALQTAAEEE) are disordered. Alanine 2 is subject to N-acetylalanine. Serine 9 carries the phosphoserine modification. The Q motif motif lies at 24–52 (KTFKDLGVTDVLCEACDQLGWAKPTKIQI). In terms of domain architecture, Helicase ATP-binding spans 55 to 226 (IPLALQGRDI…RAALKNPVKC (172 aa)). 68 to 75 (AETGSGKT) provides a ligand contact to ATP. The residue at position 149 (threonine 149) is a Phosphothreonine. A DEAD box motif is present at residues 174 to 177 (DEAD). The Helicase C-terminal domain occupies 237–397 (KLQQYYLFIP…VFPTQDEEVM (161 aa)). Residues 412–455 (MELREHGEKKKRKREDAGDDDDKEGAIGVRNKVAGGKMKKRKGR) are disordered.

Belongs to the DEAD box helicase family. DDX47/RRP3 subfamily. As to quaternary structure, interacts with AGO1 and AGO2. Interacts with GABARAP. Interacts with NOL8; the interaction is RNA-dependent.

Its subcellular location is the nucleus. The protein localises to the nucleolus. It carries out the reaction ATP + H2O = ADP + phosphate + H(+). Functionally, involved in apoptosis. May have a role in rRNA processing and mRNA splicing. Associates with pre-rRNA precursors. This chain is Probable ATP-dependent RNA helicase DDX47 (Ddx47), found in Mus musculus (Mouse).